The sequence spans 397 residues: Odorant receptor 98a (397 aa).

Residues 1-43 lie on the Cytoplasmic side of the membrane; that stretch reads MLFNYLRKPNPTNLLTSPDSFRYFEYGMFCMGWHTPATHKIIY. A helical membrane pass occupies residues 44–64; that stretch reads YITSCLIFAWCAVYLPIGIII. The Extracellular segment spans residues 65-77; sequence SFKTDINTFTPNE. A helical membrane pass occupies residues 78-98; it reads LLTVMQLFFNSVGMPFKVLFF. Topologically, residues 99–138 are cytoplasmic; sequence NLYISGFYKAKKLLSEMDKRCTTLKERVEVHQGVVRCNKA. Residues 139-159 form a helical membrane-spanning segment; that stretch reads YLIYQFIYTAYTISTFLSAAL. The Extracellular segment spans residues 160–192; the sequence is SGKLPWRIYNPFVDFRESRSSFWKAALNETALM. The N-linked (GlcNAc...) asparagine glycan is linked to N187. The chain crosses the membrane as a helical span at residues 193-213; the sequence is LFAVTQTLMSDIYPLLYGLIL. The Cytoplasmic segment spans residues 214 to 266; sequence RVHLKLLRLRVESLCTDSGKSDAENEQDLIKCIKDHNLIIDYAAAIRPAVTRT. The chain crosses the membrane as a helical span at residues 267-287; sequence IFVQFLLIGICLGLSMINLLF. Topologically, residues 288–293 are extracellular; the sequence is FADIWT. A helical membrane pass occupies residues 294–314; that stretch reads GLATVAYINGLMVQTFPFCFV. Residues 315-354 are Cytoplasmic-facing; sequence CDLLKKDCELLVSAIFHSNWINSSRSYKSSLRYFLKNAQK. A helical transmembrane segment spans residues 355 to 375; sequence SIAFTAGSIFPISTGSNIKVA. The Extracellular portion of the chain corresponds to 376–397; the sequence is KLAFSVVTFVNQLNIADRLTKN.

The protein belongs to the insect chemoreceptor superfamily. Heteromeric odorant receptor channel (TC 1.A.69) family. Or2a subfamily. Interacts with Orco. Complexes exist early in the endomembrane system in olfactory sensory neurons (OSNs), coupling these complexes to the conserved ciliary trafficking pathway. In terms of tissue distribution, expressed in olfactory sensory neurons in the antenna.

The protein localises to the cell membrane. Its function is as follows. Odorant receptor which mediates acceptance or avoidance behavior, depending on its substrates. The odorant receptor repertoire encodes a large collection of odor stimuli that vary widely in identity, intensity, and duration. May form a complex with Orco to form odorant-sensing units, providing sensitive and prolonged odorant signaling and calcium permeability. This chain is Odorant receptor 98a (Or98a), found in Drosophila melanogaster (Fruit fly).